Here is a 242-residue protein sequence, read N- to C-terminus: Phosphoribosyl isomerase A (242 aa).

Catalysis depends on Asp-12, which acts as the Proton acceptor. Residue Asp-131 is the Proton donor of the active site.

The protein belongs to the HisA/HisF family.

Its subcellular location is the cytoplasm. The enzyme catalyses 1-(5-phospho-beta-D-ribosyl)-5-[(5-phospho-beta-D-ribosylamino)methylideneamino]imidazole-4-carboxamide = 5-[(5-phospho-1-deoxy-D-ribulos-1-ylimino)methylamino]-1-(5-phospho-beta-D-ribosyl)imidazole-4-carboxamide. It catalyses the reaction N-(5-phospho-beta-D-ribosyl)anthranilate = 1-(2-carboxyphenylamino)-1-deoxy-D-ribulose 5-phosphate. It participates in amino-acid biosynthesis; L-histidine biosynthesis; L-histidine from 5-phospho-alpha-D-ribose 1-diphosphate: step 4/9. Its pathway is amino-acid biosynthesis; L-tryptophan biosynthesis; L-tryptophan from chorismate: step 3/5. Its function is as follows. Involved in both the histidine and tryptophan biosynthetic pathways. This Streptomyces avermitilis (strain ATCC 31267 / DSM 46492 / JCM 5070 / NBRC 14893 / NCIMB 12804 / NRRL 8165 / MA-4680) protein is Phosphoribosyl isomerase A.